Reading from the N-terminus, the 489-residue chain is Pluviatolide synthase (489 aa).

A helical membrane pass occupies residues S6–F26. C432 lines the heme pocket.

It belongs to the cytochrome P450 family. It depends on heme as a cofactor. In terms of tissue distribution, expressed in leaves, rhizomes and stems.

The protein resides in the membrane. It carries out the reaction (-)-matairesinol + reduced [NADPH--hemoprotein reductase] + O2 = (-)-pluviatolide + oxidized [NADPH--hemoprotein reductase] + 2 H2O + H(+). It participates in aromatic compound metabolism; phenylpropanoid biosynthesis. Cytochrome P450 involved in the biosynthesis of etoposide, a chemotherapeutic compound of the topoisomerase inhibitor family. Catalyzes the conversion of matairesinol to pluviatolide. This is Pluviatolide synthase from Sinopodophyllum hexandrum (Himalayan may apple).